A 235-amino-acid polypeptide reads, in one-letter code: Matrix protein (235 aa).

The protein belongs to the nucleorhabdovirus type-2 matrix protein family. In terms of assembly, homomultimer. Interacts with nucleoprotein and with the cytoplasmic domain of glycoprotein.

The protein localises to the virion membrane. The protein resides in the host endomembrane system. In terms of biological role, plays a major role in assembly and budding of virion. Completely covers the ribonucleoprotein coil and keep it in condensed bullet-shaped form. Inhibits viral transcription and stimulates replication. The chain is Matrix protein (M) from Colocasia esculenta (Wild taro).